Reading from the N-terminus, the 393-residue chain is NAD(P)H-quinone oxidoreductase subunit H, chloroplastic (393 aa).

The protein belongs to the complex I 49 kDa subunit family. In terms of assembly, NDH is composed of at least 16 different subunits, 5 of which are encoded in the nucleus.

Its subcellular location is the plastid. It is found in the chloroplast thylakoid membrane. The enzyme catalyses a plastoquinone + NADH + (n+1) H(+)(in) = a plastoquinol + NAD(+) + n H(+)(out). It carries out the reaction a plastoquinone + NADPH + (n+1) H(+)(in) = a plastoquinol + NADP(+) + n H(+)(out). NDH shuttles electrons from NAD(P)H:plastoquinone, via FMN and iron-sulfur (Fe-S) centers, to quinones in the photosynthetic chain and possibly in a chloroplast respiratory chain. The immediate electron acceptor for the enzyme in this species is believed to be plastoquinone. Couples the redox reaction to proton translocation, and thus conserves the redox energy in a proton gradient. This is NAD(P)H-quinone oxidoreductase subunit H, chloroplastic from Cicer arietinum (Chickpea).